The chain runs to 1939 residues: Myosin-1 (1939 aa).

The Myosin N-terminal SH3-like domain maps to 33–82; sequence DAKTSVFVVDPKESFVKATVQSREGGKVTAKTEAGATVTVKDDQVFPMNP. Thr64 and Thr69 each carry phosphothreonine. Positions 86-782 constitute a Myosin motor domain; that stretch reads DKIEDMAMMT…LLGLLEEMRD (697 aa). Lys130 is subject to N6,N6,N6-trimethyllysine. 179–186 is a binding site for ATP; sequence GESGAGKT. Position 389 is a phosphotyrosine (Tyr389). Residue Thr419 is modified to Phosphothreonine. Tyr424 is subject to Phosphotyrosine. The segment at 659 to 681 is actin-binding; it reads LNKLMTNLRSTHPHFVRCIIPNE. A Pros-methylhistidine modification is found at His757. The actin-binding stretch occupies residues 761–775; that stretch reads KFGHTKVFFKAGLLG. The IQ domain maps to 785 to 814; that stretch reads LAQLITRTQAMCRGFLARVEYQKMVERRES. Residues 843 to 1939 adopt a coiled-coil conformation; sequence LLKSAETEKE…EVHTKIISEE (1097 aa). Residues Ser1092, Ser1096, Ser1162, and Ser1237 each carry the phosphoserine modification. Thr1241 carries the phosphothreonine modification. Phosphoserine occurs at positions 1243 and 1261. 2 positions are modified to phosphothreonine: Thr1265 and Thr1286. Residues Ser1288, Ser1292, Ser1303, and Ser1306 each carry the phosphoserine modification. Thr1467 is modified (phosphothreonine). At Ser1474 the chain carries Phosphoserine. Tyr1492 is modified (phosphotyrosine). Ser1495 is subject to Phosphoserine. Thr1501 bears the Phosphothreonine mark. Position 1514 is a phosphoserine (Ser1514). At Thr1517 the chain carries Phosphothreonine. Phosphoserine occurs at positions 1542, 1554, 1574, 1600, 1603, 1714, and 1726. 2 positions are modified to phosphothreonine: Thr1730 and Thr1736. Ser1739 bears the Phosphoserine mark.

The protein belongs to the TRAFAC class myosin-kinesin ATPase superfamily. Myosin family. As to quaternary structure, muscle myosin is a hexameric protein that consists of 2 heavy chain subunits (MHC), 2 alkali light chain subunits (MLC) and 2 regulatory light chain subunits (MLC-2). Interacts with SLC26A5.

It localises to the cytoplasm. Its subcellular location is the myofibril. In terms of biological role, required for normal hearing. It plays a role in cochlear amplification of auditory stimuli, likely through the positive regulation of prestin (SLC26A5) activity and outer hair cell (OHC) electromotility. This chain is Myosin-1, found in Homo sapiens (Human).